Consider the following 207-residue polypeptide: Mediator of RNA polymerase II transcription subunit 21 (207 aa).

Residues 36–120 (IPPPDVPDAA…APDSPRTFAS (85 aa)) form a disordered region. Positions 91 to 108 (GEGAQTPGPAAGAGADPN) are enriched in low complexity. A coiled-coil region spans residues 146–194 (IDSSEAEQEKRIRELEGELRQVEEERELKMRELKRLRRTLENVLTAVET).

This sequence belongs to the Mediator complex subunit 21 family. Component of the Mediator complex.

Its subcellular location is the nucleus. In terms of biological role, component of the Mediator complex, a coactivator involved in the regulated transcription of nearly all RNA polymerase II-dependent genes. Mediator functions as a bridge to convey information from gene-specific regulatory proteins to the basal RNA polymerase II transcription machinery. Mediator is recruited to promoters by direct interactions with regulatory proteins and serves as a scaffold for the assembly of a functional preinitiation complex with RNA polymerase II and the general transcription factors. The protein is Mediator of RNA polymerase II transcription subunit 21 (srb7) of Aspergillus fumigatus (strain ATCC MYA-4609 / CBS 101355 / FGSC A1100 / Af293) (Neosartorya fumigata).